Reading from the N-terminus, the 1018-residue chain is Importin-9 (1018 aa).

Residues 35–114 (TEKRIKQLEY…RNILPNGLYD (80 aa)) form the Importin N-terminal domain. Residues 921 to 950 (GKSDEPLTDSEEDGDDEDAPGNPDKPRYIS) are disordered. Residues 926–939 (PLTDSEEDGDDEDA) show a composition bias toward acidic residues.

Belongs to the importin beta family.

The protein resides in the cytoplasm. It localises to the nucleus. Its function is as follows. Nuclear transport receptor that mediates nuclear import of proteins. Serves as receptor for nuclear localization signals (NLS) in cargo substrates. Is thought to mediate docking of the importin/substrate complex to the nuclear pore complex (NPC) through binding to nucleoporin and the complex is subsequently translocated through the pore by an energy requiring, Ran-dependent mechanism. Mediates the import of pre-assembled proteasomes into the nucleus during the late stages of sperm development. The protein is Importin-9 of Drosophila melanogaster (Fruit fly).